Reading from the N-terminus, the 147-residue chain is 3-hydroxyacyl-[acyl-carrier-protein] dehydratase FabZ (147 aa).

Histidine 53 is an active-site residue.

Belongs to the thioester dehydratase family. FabZ subfamily.

The protein localises to the cytoplasm. It catalyses the reaction a (3R)-hydroxyacyl-[ACP] = a (2E)-enoyl-[ACP] + H2O. Functionally, involved in unsaturated fatty acids biosynthesis. Catalyzes the dehydration of short chain beta-hydroxyacyl-ACPs and long chain saturated and unsaturated beta-hydroxyacyl-ACPs. The sequence is that of 3-hydroxyacyl-[acyl-carrier-protein] dehydratase FabZ from Synechococcus sp. (strain WH7803).